Consider the following 479-residue polypeptide: Arf-GAP domain and FG repeat-containing protein 2 (479 aa).

Positions 27-153 (EVWCRRVREL…WYVPPEQVKG (127 aa)) constitute an Arf-GAP domain. The C4-type zinc finger occupies 47 to 70 (CFECAQRGVTYVDITVGSFVCTTC). Disordered regions lie at residues 150–223 (QVKG…TKKA) and 450–479 (LSQPAGISTNPFMTGSSAFASKPPTTNPFL). Residues 157–167 (SKGSVSATPVQ) are compositionally biased toward polar residues. Lys174 carries the post-translational modification N6-acetyllysine. Residues 194–218 (SSQPGSQSQARSSSQARSSQPPSHS) are compositionally biased toward low complexity. Residues 454–479 (AGISTNPFMTGSSAFASKPPTTNPFL) are compositionally biased toward polar residues.

Interacts with EPS15R.

In Mus musculus (Mouse), this protein is Arf-GAP domain and FG repeat-containing protein 2 (Agfg2).